A 154-amino-acid polypeptide reads, in one-letter code: MTQDYKLQVEAIKCGTVIDHIPAQIGFKLLSLFKLTATDQRITIGLNLPSKRSGRKDLIKIENTFLTEQQANQLAMYAPDATVNRIDNYEVVKKLTLSLPERIDAVLTCPNSNCISHNEPVDSSFTVKAQRGEISLKCKYCEKEFDHLTVLHAD.

The Zn(2+) site is built by Cys109, Cys114, Cys138, and Cys141.

This sequence belongs to the PyrI family. In terms of assembly, contains catalytic and regulatory chains. Zn(2+) serves as cofactor.

Functionally, involved in allosteric regulation of aspartate carbamoyltransferase. This is Aspartate carbamoyltransferase regulatory chain from Yersinia pestis.